Here is a 92-residue protein sequence, read N- to C-terminus: UPF0235 protein PF1765 (92 aa).

This sequence belongs to the UPF0235 family.

In Pyrococcus furiosus (strain ATCC 43587 / DSM 3638 / JCM 8422 / Vc1), this protein is UPF0235 protein PF1765.